The following is a 460-amino-acid chain: ATP synthase subunit beta (460 aa).

149–156 (GGAGVGKT) contributes to the ATP binding site.

The protein belongs to the ATPase alpha/beta chains family. As to quaternary structure, F-type ATPases have 2 components, CF(1) - the catalytic core - and CF(0) - the membrane proton channel. CF(1) has five subunits: alpha(3), beta(3), gamma(1), delta(1), epsilon(1). CF(0) has three main subunits: a(1), b(2) and c(9-12). The alpha and beta chains form an alternating ring which encloses part of the gamma chain. CF(1) is attached to CF(0) by a central stalk formed by the gamma and epsilon chains, while a peripheral stalk is formed by the delta and b chains.

Its subcellular location is the cell membrane. The enzyme catalyses ATP + H2O + 4 H(+)(in) = ADP + phosphate + 5 H(+)(out). Its function is as follows. Produces ATP from ADP in the presence of a proton gradient across the membrane. The catalytic sites are hosted primarily by the beta subunits. The polypeptide is ATP synthase subunit beta (Acholeplasma laidlawii (strain PG-8A)).